An 828-amino-acid chain; its full sequence is Periplasmic nitrate reductase (828 aa).

The tat-type signal signal peptide spans 1–31 (MKLSRRSFMKANAVAAAAAAAGLSVPGVARA). The region spanning 39–95 (IKWDKAPCRFCGTGCGVLVGTQQGRVVACQGDPDAPVNRGLNCIKGYFLPKIMYGKD) is the 4Fe-4S Mo/W bis-MGD-type domain. 4 residues coordinate [4Fe-4S] cluster: cysteine 46, cysteine 49, cysteine 53, and cysteine 81. Mo-bis(molybdopterin guanine dinucleotide) is bound by residues lysine 83, glutamine 150, asparagine 175, cysteine 179, 212–219 (WGANMAEM), 243–247 (STYQH), 262–264 (QSD), methionine 372, glutamine 376, asparagine 482, 508–509 (SD), lysine 531, aspartate 558, and 718–727 (TGRVLEHWHT). Phenylalanine 794 lines the substrate pocket. The Mo-bis(molybdopterin guanine dinucleotide) site is built by asparagine 802 and lysine 819.

This sequence belongs to the prokaryotic molybdopterin-containing oxidoreductase family. NasA/NapA/NarB subfamily. As to quaternary structure, component of the periplasmic nitrate reductase NapAB complex composed of NapA and NapB. Requires [4Fe-4S] cluster as cofactor. It depends on Mo-bis(molybdopterin guanine dinucleotide) as a cofactor. In terms of processing, predicted to be exported by the Tat system. The position of the signal peptide cleavage has not been experimentally proven.

The protein localises to the periplasm. It carries out the reaction 2 Fe(II)-[cytochrome] + nitrate + 2 H(+) = 2 Fe(III)-[cytochrome] + nitrite + H2O. Catalytic subunit of the periplasmic nitrate reductase complex NapAB. Receives electrons from NapB and catalyzes the reduction of nitrate to nitrite. The polypeptide is Periplasmic nitrate reductase (Shigella boydii serotype 18 (strain CDC 3083-94 / BS512)).